The sequence spans 352 residues: MVHDFDPFALRISGDFGIRWYGLSYMMGFICAYILITWLAKRQRAGLSVQMVGDFITYAAIGTLVGGRLGYVLFYGPDLFLKFKSEFPYWGVLAVNEGGMASHGGIIGIVIACLLYARKYSVNSLYLLDLVAVTGPIGVFFGRIANFINGELVGRPCDPTYPLAVKFPQDIVSWPGQEAAKLTELVPVVEKVGVGREQWLELVDKFRFDMAAREQLYATLNKVIESIQDGNTAAKEAIAPLLTPRYPSQLFAAFGEGLLIFMFLFFLWRKPRKPGFIAACFVLIYAVVRVVDEHFRMPDAHIGFQALGLTRGQWLSLAMFVVGLILMVVWTRAASLKIPGWQRGHSIKLNRK.

The next 4 membrane-spanning stretches (helical) occupy residues 20-40 (WYGLSYMMGFICAYILITWLA), 55-75 (FITYAAIGTLVGGRLGYVLFY), 97-117 (EGGMASHGGIIGIVIACLLYA), and 122-142 (VNSLYLLDLVAVTGPIGVFFG). Arg-143 is an a 1,2-diacyl-sn-glycero-3-phospho-(1'-sn-glycerol) binding site. A run of 3 helical transmembrane segments spans residues 248–268 (SQLFAAFGEGLLIFMFLFFLW), 275–295 (GFIAACFVLIYAVVRVVDEHF), and 314–334 (WLSLAMFVVGLILMVVWTRAA).

It belongs to the Lgt family.

It is found in the cell inner membrane. The catalysed reaction is L-cysteinyl-[prolipoprotein] + a 1,2-diacyl-sn-glycero-3-phospho-(1'-sn-glycerol) = an S-1,2-diacyl-sn-glyceryl-L-cysteinyl-[prolipoprotein] + sn-glycerol 1-phosphate + H(+). Its pathway is protein modification; lipoprotein biosynthesis (diacylglyceryl transfer). In terms of biological role, catalyzes the transfer of the diacylglyceryl group from phosphatidylglycerol to the sulfhydryl group of the N-terminal cysteine of a prolipoprotein, the first step in the formation of mature lipoproteins. This Bdellovibrio bacteriovorus (strain ATCC 15356 / DSM 50701 / NCIMB 9529 / HD100) protein is Phosphatidylglycerol--prolipoprotein diacylglyceryl transferase.